A 203-amino-acid chain; its full sequence is Glycerol-3-phosphate acyltransferase (203 aa).

6 consecutive transmembrane segments (helical) span residues 1 to 21 (MPAW…GSIP), 52 to 72 (VGKG…AAAV), 73 to 93 (ALGS…GAVI), 115 to 135 (ILLA…LLGI), 140 to 160 (IVSF…WALG), and 161 to 181 (QPLP…AAHR).

Belongs to the PlsY family. As to quaternary structure, probably interacts with PlsX.

The protein localises to the cell inner membrane. It catalyses the reaction an acyl phosphate + sn-glycerol 3-phosphate = a 1-acyl-sn-glycero-3-phosphate + phosphate. The protein operates within lipid metabolism; phospholipid metabolism. Catalyzes the transfer of an acyl group from acyl-phosphate (acyl-PO(4)) to glycerol-3-phosphate (G3P) to form lysophosphatidic acid (LPA). This enzyme utilizes acyl-phosphate as fatty acyl donor, but not acyl-CoA or acyl-ACP. The polypeptide is Glycerol-3-phosphate acyltransferase (Synechococcus sp. (strain JA-3-3Ab) (Cyanobacteria bacterium Yellowstone A-Prime)).